We begin with the raw amino-acid sequence, 205 residues long: Ephrin-A1 (205 aa).

An N-terminal signal peptide occupies residues 1–18; the sequence is MEFFWASLLGLCCSLAAA. The Ephrin RBD domain occupies 19-151; that stretch reads NRHTVFWNSS…RLKVMIAGKI (133 aa). N-linked (GlcNAc...) asparagine glycosylation occurs at asparagine 26. Cystine bridges form between cysteine 51–cysteine 92 and cysteine 80–cysteine 140. Residue serine 182 is the site of GPI-anchor amidated serine attachment. The propeptide at 183–205 is removed in mature form; it reads AAPRLFPLAWAVLLLPFLLLQIP.

This sequence belongs to the ephrin family. As to quaternary structure, monomer. Homodimer. Forms heterodimers with EPHA2. Binds to the receptor tyrosine kinases EPHA2, EPHA3, EPHA4, EPHA5, EPHA6 and EPHA7. Also binds with low affinity to EPHA1. Post-translationally, undergoes proteolysis by a metalloprotease to give rise to a soluble monomeric form. In terms of processing, N-Glycosylation is required for binding to EPHA2 receptor and inducing its internalization.

The protein resides in the cell membrane. It localises to the secreted. In terms of biological role, cell surface GPI-bound ligand for Eph receptors, a family of receptor tyrosine kinases which are crucial for migration, repulsion and adhesion during neuronal, vascular and epithelial development. Binds promiscuously Eph receptors residing on adjacent cells, leading to contact-dependent bidirectional signaling into neighboring cells. Plays an important role in angiogenesis and tumor neovascularization. The recruitment of VAV2, VAV3 and PI3-kinase p85 subunit by phosphorylated EPHA2 is critical for EFNA1-induced RAC1 GTPase activation and vascular endothelial cell migration and assembly. Exerts anti-oncogenic effects in tumor cells through activation and down-regulation of EPHA2. Activates EPHA2 by inducing tyrosine phosphorylation which leads to its internalization and degradation. Acts as a negative regulator in the tumorigenesis of gliomas by down-regulating EPHA2 and FAK. Can evoke collapse of embryonic neuronal growth cone and regulates dendritic spine morphogenesis. The sequence is that of Ephrin-A1 (EFNA1) from Bos taurus (Bovine).